Consider the following 476-residue polypeptide: 3-isopropylmalate dehydratase large subunit (476 aa).

[4Fe-4S] cluster-binding residues include C355, C416, and C419.

The protein belongs to the aconitase/IPM isomerase family. LeuC type 1 subfamily. In terms of assembly, heterodimer of LeuC and LeuD. The cofactor is [4Fe-4S] cluster.

The catalysed reaction is (2R,3S)-3-isopropylmalate = (2S)-2-isopropylmalate. It functions in the pathway amino-acid biosynthesis; L-leucine biosynthesis; L-leucine from 3-methyl-2-oxobutanoate: step 2/4. Functionally, catalyzes the isomerization between 2-isopropylmalate and 3-isopropylmalate, via the formation of 2-isopropylmaleate. The polypeptide is 3-isopropylmalate dehydratase large subunit (Sphingopyxis alaskensis (strain DSM 13593 / LMG 18877 / RB2256) (Sphingomonas alaskensis)).